The sequence spans 239 residues: MAVVTLAEMMEAGAHFGHQTRRWNPKMSRYIYCARNGVHIIDLVQTAVCMNNAYKWVRSAARSGKRFLFVGTKKQASEVVAQEALRCGGSYVNQRWLGGMLTNWTTMKARIDRLKDLERMEASGAIAMRPKKEGAVLRRELDRLQKYLGGLKNMRRLPDVVVLVDQRRETNAVLEARKLDIPLVSMLDTNCDPDLCEVPIPCNDDAVRSVQLVLSRLADAINEGRHGSNEQRGGDGSEG.

It belongs to the universal ribosomal protein uS2 family.

The sequence is that of Small ribosomal subunit protein uS2 from Synechococcus sp. (strain WH7803).